Reading from the N-terminus, the 354-residue chain is DNA integrity scanning protein DisA (354 aa).

One can recognise a DAC domain in the interval 6-144; the sequence is GMKIKDTLKI…GDIKYVLRDS (139 aa). ATP is bound by residues Gly-73, Leu-91, and 104–108; that span reads TRHRT.

This sequence belongs to the DisA family. Homooctamer. Mg(2+) is required as a cofactor.

It carries out the reaction 2 ATP = 3',3'-c-di-AMP + 2 diphosphate. Its function is as follows. Participates in a DNA-damage check-point that is active prior to asymmetric division when DNA is damaged. DisA forms globular foci that rapidly scan along the chromosomes during sporulation, searching for lesions. When a lesion is present, DisA pauses at the lesion site. This triggers a cellular response that culminates in a temporary block in sporulation initiation. Functionally, also has diadenylate cyclase activity, catalyzing the condensation of 2 ATP molecules into cyclic di-AMP (c-di-AMP). c-di-AMP acts as a signaling molecule that couples DNA integrity with progression of sporulation. The rise in c-di-AMP level generated by DisA while scanning the chromosome, operates as a positive signal that advances sporulation; upon encountering a lesion, the DisA focus arrests at the damaged site and halts c-di-AMP synthesis. The sequence is that of DNA integrity scanning protein DisA from Clostridium botulinum (strain Eklund 17B / Type B).